The primary structure comprises 940 residues: MLMMFSPAFVMVMDLMVLVMMIMMMVSSLDAHGHISCIESERKGLLELKAYLNISEYPYDWPNDTNNSDCCKWERVKCDLTSGRVIGLLLTDTYYPPPLLNLSLFYPFGELQTLNLSNFWCQGWFDHIHGYKSFERLKNLEILDISENGVNNTVLPFINTASSLKTLILHGNNMEGTFPMKELINLRNLELLDLSKNQFVGPVPDLANFHNLQGLDMSDNKFSGSNKGLCQLKNLRELDLSQNKFTGQFPQCFDSLTQLQVLDISSNNFNGTVPSLIRNLDSVEYLALSDNEFKGFFSLELIANLSKLKVFKLSSRSNLLRLKKLSSLQPKFQLSVIELQNCNLENVPSFIQHQKDLHVINLSNNKLTGVFPYWLLEKYPNLRVLLLQNNSLTMLELPRLLNHTLQILDLSANNFDQRLPENIGKVLPNIRHLNLSNNGFQWILPSSFGEMKDIKFLDLSHNNFSGSLPMKFLIGCSSLHTLKLSYNKFFGQIFPKQTNFGSLVVLIANNNLFTGIADGLRNVQSLGVLDLSNNYLQGVIPSWFGGFFFAYLFLSNNLLEGTLPSTLFSKPTFKILDLSGNKFSGNLPSHFTGMDMSLLYLNDNEFSGTIPSTLIKDVLVLDLRNNKLSGTIPHFVKNEFILSLLLRGNTLTGHIPTDLCGLRSIRILDLANNRLKGSIPTCLNNVSFGRRLNYEVNGDKLPFEINDDEEFAVYSRLLVLPRQYSPDYTGVLMFNVEFASKSRYDSYTQESFNFMFGLDLSSNELSGDIPKELGDLQRIRALNLSHNSLSGLIPQSFSNLTDIESIDLSFNLLRGPIPQDLSKLDYMVVFNVSYNNLSGSIPSHGKFSTLDETNFIGNLLLCGSAINRSCDDNSTTEFLESDDQSGDEETTIDMEIFYWSLAATYGVTWITFIVFLCFDSPWRRVWFHFVDAFISLFKCV.

Positions 1–28 are cleaved as a signal peptide; that stretch reads MLMMFSPAFVMVMDLMVLVMMIMMMVSS. At 29-895 the chain is on the extracellular side; the sequence is LDAHGHISCI…GDEETTIDME (867 aa). Residues Asn53, Asn63, Asn66, Asn101, Asn115, and Asn151 are each glycosylated (N-linked (GlcNAc...) asparagine). LRR repeat units lie at residues 108-136, 137-163, 165-185, 186-211, 213-232, 233-255, 257-279, 281-304, 306-330, 331-354, 355-378, 379-402, 403-426, 427-450, 452-475, and 477-502; these read FGELQTLNLSNFWCQGWFDHIHGYKSFER, LKNLEILDISENGVNNTVLPFINTASS, KTLILHGNNMEGTFPMKELIN, LRNLELLDLSKNQFVGPVPDLANFHN, QGLDMSDNKFSGSNKGLCQL, KNLRELDLSQNKFTGQFPQCFDS, TQLQVLDISSNNFNGTVPSLIRN, DSVEYLALSDNEFKGFFSLELIAN, SKLKVFKLSSRSNLLRLKKLSSLQP, KFQLSVIELQNCNLENVPSFIQHQ, KDLHVINLSNNKLTGVFPYWLLEK, YPNLRVLLLQNNSLTMLELPRLLN, HTLQILDLSANNFDQRLPENIGKV, LPNIRHLNLSNNGFQWILPSSFGE, KDIKFLDLSHNNFSGSLPMKFLIG, and SSLHTLKLSYNKFFGQIFPKQTNFGS. N-linked (GlcNAc...) asparagine glycosylation is found at Asn270 and Asn304. Asn361, Asn389, and Asn402 each carry an N-linked (GlcNAc...) asparagine glycan. N-linked (GlcNAc...) asparagine glycosylation is found at Asn434 and Asn463. An LRR 17; degenerate repeat occupies 503–522; it reads LVVLIANNNLFTGIADGLRN. LRR repeat units follow at residues 523–546, 547–570, 571–593, 595–615, 616–639, 641–662, 663–686, 752–776, 777–799, 801–824, and 826–849; these read VQSLGVLDLSNNYLQGVIPSWFGG, FFFAYLFLSNNLLEGTLPSTLFSK, PTFKILDLSGNKFSGNLPSHFTG, DMSLLYLNDNEFSGTIPSTLI, KDVLVLDLRNNKLSGTIPHFVKNE, ILSLLLRGNTLTGHIPTDLCGL, RSIRILDLANNRLKGSIPTCLNNV, FNFMFGLDLSSNELSGDIPKELGDL, QRIRALNLSHNSLSGLIPQSFSN, TDIESIDLSFNLLRGPIPQDLSKL, and YMVVFNVSYNNLSGSIPSHGKFST. Asn685 carries an N-linked (GlcNAc...) asparagine glycan. Asn783 and Asn799 each carry an N-linked (GlcNAc...) asparagine glycan. Asn831, Asn836, Asn867, and Asn873 each carry an N-linked (GlcNAc...) asparagine glycan. A helical membrane pass occupies residues 896–916; the sequence is IFYWSLAATYGVTWITFIVFL. Residues 917-940 are Cytoplasmic-facing; it reads CFDSPWRRVWFHFVDAFISLFKCV.

This sequence belongs to the RLP family.

The protein resides in the cell membrane. In Arabidopsis thaliana (Mouse-ear cress), this protein is Receptor-like protein 9b.